A 477-amino-acid chain; its full sequence is Stromelysin-1 (477 aa).

Residues 1–17 form the signal peptide; sequence MKNLPILLLLCVAACSA. A propeptide spans 18–99 (activation peptide); that stretch reads YPLDRSARDE…SRCGVPDVGH (82 aa). The short motif at 90–97 is the Cysteine switch element; it reads SRCGVPDV. Cysteine 92 is a binding site for Zn(2+). Residue asparagine 120 is glycosylated (N-linked (GlcNAc...) asparagine). Ca(2+) is bound by residues aspartate 124 and aspartate 158. Residues histidine 168 and aspartate 170 each contribute to the Zn(2+) site. Ca(2+)-binding residues include aspartate 175, glycine 176, glycine 178, and valine 180. Residue histidine 183 coordinates Zn(2+). Residues glycine 190, asparagine 192, and aspartate 194 each contribute to the Ca(2+) site. Histidine 196 is a binding site for Zn(2+). The Ca(2+) site is built by aspartate 198, aspartate 199, and glutamate 201. Histidine 218 is a binding site for Zn(2+). The active site involves glutamate 219. Positions 222 and 228 each coordinate Zn(2+). The interval 260-285 is disordered; that stretch reads QSLYGPPPASPDSPVEPSEPEPPAPG. Hemopexin repeat units lie at residues 287-336, 337-383, 385-433, and 434-477; these read LAMC…WPSL, PSGI…GFPP, VRKI…FPGI, and DSKL…WFNC. Cysteine 290 and cysteine 477 are joined by a disulfide. Aspartate 297 contributes to the Ca(2+) binding site. Positions 389 and 438 each coordinate Ca(2+).

This sequence belongs to the peptidase M10A family. Ca(2+) serves as cofactor. Zn(2+) is required as a cofactor.

The protein localises to the secreted. It localises to the extracellular space. Its subcellular location is the extracellular matrix. The enzyme catalyses Preferential cleavage where P1', P2' and P3' are hydrophobic residues.. In terms of biological role, metalloproteinase with a rather broad substrate specificity that can degrade fibronectin, laminin, gelatins of type I, III, IV, and V; collagens III, IV, X, and IX, and cartilage proteoglycans. Activates different molecules including growth factors, plasminogen or other matrix metalloproteinases such as MMP9. Once released into the extracellular matrix (ECM), the inactive pro-enzyme is activated by the plasmin cascade signaling pathway. Also acts intracellularly. For example, in dopaminergic neurons, gets activated by the serine protease HTRA2 upon stress and plays a pivotal role in DA neuronal degeneration by mediating microglial activation and alpha-synuclein/SNCA cleavage. In addition, plays a role in immune response and possesses antiviral activity against various viruses. Mechanistically, translocates from the cytoplasm into the cell nucleus upon virus infection to influence NF-kappa-B activities. This Equus caballus (Horse) protein is Stromelysin-1 (MMP3).